The following is a 281-amino-acid chain: DegV domain-containing protein (281 aa).

The 278-residue stretch at 3-280 (WKIVSDSGCD…EGGLLMGYEI (278 aa)) folds into the DegV domain. Residues S63 and S91 each contribute to the hexadecanoate site.

In terms of biological role, may bind long-chain fatty acids, such as palmitate, and may play a role in lipid transport or fatty acid metabolism. This is DegV domain-containing protein from Streptococcus gordonii.